The primary structure comprises 96 residues: Transcription and mRNA export factor ENY2 (96 aa).

The protein belongs to the ENY2 family. Component of the nuclear pore complex (NPC)-associated TREX-2 complex (transcription and export complex 2). Component of the SAGA transcription coactivator-HAT complex. Within the SAGA complex, participates in a subcomplex of SAGA called the DUB module (deubiquitination module).

The protein localises to the nucleus. The protein resides in the nucleoplasm. In terms of biological role, involved in mRNA export coupled transcription activation by association with both the TREX-2 and the SAGA complexes. The transcription regulatory histone acetylation (HAT) complex SAGA is a multiprotein complex that activates transcription by remodeling chromatin and mediating histone acetylation and deubiquitination. Within the SAGA complex, participates in a subcomplex that specifically deubiquitinates histones. The SAGA complex is recruited to specific gene promoters by activators, where it is required for transcription. The TREX-2 complex functions in docking export-competent ribonucleoprotein particles (mRNPs) to the nuclear entrance of the nuclear pore complex (nuclear basket). TREX-2 participates in mRNA export and accurate chromatin positioning in the nucleus by tethering genes to the nuclear periphery. The chain is Transcription and mRNA export factor ENY2 from Taeniopygia guttata (Zebra finch).